The primary structure comprises 156 residues: Small ribosomal subunit protein uS7 (156 aa).

Belongs to the universal ribosomal protein uS7 family. As to quaternary structure, part of the 30S ribosomal subunit. Contacts proteins S9 and S11.

Its function is as follows. One of the primary rRNA binding proteins, it binds directly to 16S rRNA where it nucleates assembly of the head domain of the 30S subunit. Is located at the subunit interface close to the decoding center, probably blocks exit of the E-site tRNA. The protein is Small ribosomal subunit protein uS7 of Leuconostoc citreum (strain KM20).